A 202-amino-acid polypeptide reads, in one-letter code: Na(+)-translocating NADH-quinone reductase subunit E (202 aa).

Transmembrane regions (helical) follow at residues 11 to 31, 39 to 59, 79 to 99, 114 to 134, 144 to 164, and 180 to 200; these read SIFL…FLAV, MGLG…NQLV, LSFL…QILE, GIFL…AFAV, IFYG…LAAV, and LGSV…FSGV.

This sequence belongs to the NqrDE/RnfAE family. In terms of assembly, composed of six subunits; NqrA, NqrB, NqrC, NqrD, NqrE and NqrF.

The protein localises to the cell inner membrane. The enzyme catalyses a ubiquinone + n Na(+)(in) + NADH + H(+) = a ubiquinol + n Na(+)(out) + NAD(+). NQR complex catalyzes the reduction of ubiquinone-1 to ubiquinol by two successive reactions, coupled with the transport of Na(+) ions from the cytoplasm to the periplasm. NqrA to NqrE are probably involved in the second step, the conversion of ubisemiquinone to ubiquinol. This is Na(+)-translocating NADH-quinone reductase subunit E from Pseudoalteromonas atlantica (strain T6c / ATCC BAA-1087).